The primary structure comprises 354 residues: Protein RecA (354 aa).

Position 67–74 (67–74 (GPESSGKT)) interacts with ATP.

The protein belongs to the RecA family.

It localises to the cytoplasm. In terms of biological role, can catalyze the hydrolysis of ATP in the presence of single-stranded DNA, the ATP-dependent uptake of single-stranded DNA by duplex DNA, and the ATP-dependent hybridization of homologous single-stranded DNAs. It interacts with LexA causing its activation and leading to its autocatalytic cleavage. The protein is Protein RecA of Yersinia enterocolitica serotype O:8 / biotype 1B (strain NCTC 13174 / 8081).